A 616-amino-acid polypeptide reads, in one-letter code: Chaperone protein HscA (616 aa).

Belongs to the heat shock protein 70 family.

In terms of biological role, chaperone involved in the maturation of iron-sulfur cluster-containing proteins. Has a low intrinsic ATPase activity which is markedly stimulated by HscB. Involved in the maturation of IscU. This is Chaperone protein HscA from Escherichia coli O6:H1 (strain CFT073 / ATCC 700928 / UPEC).